The chain runs to 596 residues: Sphingomyelinase C 1 (596 aa).

An N-terminal signal peptide occupies residues 1–36 (MITKRNIPCKKNWKYKKKSISLTLITICYMFLFLTS). A disordered region spans residues 63–118 (KIEDSTNTDPSSNVNEEDENSINANANDNAPSDSDSSNPRSPDKNPVNPTSPNSSS). Polar residues predominate over residues 67 to 76 (STNTDPSSNV). Low complexity predominate over residues 83–118 (SINANANDNAPSDSDSSNPRSPDKNPVNPTSPNSSS).

It is found in the secreted. The enzyme catalyses a sphingomyelin + H2O = phosphocholine + an N-acylsphing-4-enine + H(+). The polypeptide is Sphingomyelinase C 1 (sph1) (Leptospira interrogans serogroup Icterohaemorrhagiae serovar copenhageni (strain Fiocruz L1-130)).